Here is a 482-residue protein sequence, read N- to C-terminus: UDP-N-acetylmuramoyl-L-alanyl-D-glutamate--2,6-diaminopimelate ligase (482 aa).

UDP-N-acetyl-alpha-D-muramoyl-L-alanyl-D-glutamate contacts are provided by Leu-28 and Ser-30. 108–114 contributes to the ATP binding site; the sequence is GTNGKTT. UDP-N-acetyl-alpha-D-muramoyl-L-alanyl-D-glutamate-binding positions include 150-151, Ser-177, Gln-183, and Arg-185; that span reads TT. N6-carboxylysine is present on Lys-217. Meso-2,6-diaminopimelate is bound by residues Arg-372, 396-399, Gly-447, and Glu-451; that span reads DNPR. The short motif at 396–399 is the Meso-diaminopimelate recognition motif element; it reads DNPR.

It belongs to the MurCDEF family. MurE subfamily. Mg(2+) is required as a cofactor. Carboxylation is probably crucial for Mg(2+) binding and, consequently, for the gamma-phosphate positioning of ATP.

It localises to the cytoplasm. The catalysed reaction is UDP-N-acetyl-alpha-D-muramoyl-L-alanyl-D-glutamate + meso-2,6-diaminopimelate + ATP = UDP-N-acetyl-alpha-D-muramoyl-L-alanyl-gamma-D-glutamyl-meso-2,6-diaminopimelate + ADP + phosphate + H(+). The protein operates within cell wall biogenesis; peptidoglycan biosynthesis. In terms of biological role, catalyzes the addition of meso-diaminopimelic acid to the nucleotide precursor UDP-N-acetylmuramoyl-L-alanyl-D-glutamate (UMAG) in the biosynthesis of bacterial cell-wall peptidoglycan. This chain is UDP-N-acetylmuramoyl-L-alanyl-D-glutamate--2,6-diaminopimelate ligase, found in Aquifex aeolicus (strain VF5).